A 136-amino-acid chain; its full sequence is ATP synthase F(0) complex subunit C1, mitochondrial (136 aa).

The transit peptide at M1 to R61 directs the protein to the mitochondrion. Residues V77–Y97 form a helical membrane-spanning segment. K104 carries the N6,N6,N6-trimethyllysine modification. The chain crosses the membrane as a helical span at residues I112–I132.

It belongs to the ATPase C chain family. Homooctamer; the c-ring consists of eight c subunits forming a circle, and each subunit adopts a hairpin shape. Component of the ATP synthase complex composed at least of ATP5F1A/subunit alpha, ATP5F1B/subunit beta, ATP5MC1/subunit c (homooctomer), MT-ATP6/subunit a, MT-ATP8/subunit 8, ATP5ME/subunit e, ATP5MF/subunit f, ATP5MG/subunit g, ATP5MK/subunit k, ATP5MJ/subunit j, ATP5F1C/subunit gamma, ATP5F1D/subunit delta, ATP5F1E/subunit epsilon, ATP5PF/subunit F6, ATP5PB/subunit b, ATP5PD/subunit d, ATP5PO/subunit OSCP. ATP synthase complex consists of a soluble F(1) head domain (subunits alpha(3) and beta(3)) - the catalytic core - and a membrane F(0) domain - the membrane proton channel (subunits c, a, 8, e, f, g, k and j). These two domains are linked by a central stalk (subunits gamma, delta, and epsilon) rotating inside the F1 region and a stationary peripheral stalk (subunits F6, b, d, and OSCP). Interacts with TMEM70 (homooligomer form); this interaction facilitates the oligomer formation of subunit c/ATP5MC1 (c-ring) and the c-ring membrane insertion and also protects ATP5MC1 against intramitochondrial proteolysis. Trimethylated by ATPSCKMT at Lys-104. Methylation is required for proper incorporation of the C subunit into the ATP synthase complex and mitochondrial respiration.

The protein resides in the mitochondrion membrane. It carries out the reaction H(+)(in) = H(+)(out). Its function is as follows. Subunit c, of the mitochondrial membrane ATP synthase complex (F(1)F(0) ATP synthase or Complex V) that produces ATP from ADP in the presence of a proton gradient across the membrane which is generated by electron transport complexes of the respiratory chain. ATP synthase complex consist of a soluble F(1) head domain - the catalytic core - and a membrane F(1) domain - the membrane proton channel. These two domains are linked by a central stalk rotating inside the F(1) region and a stationary peripheral stalk. During catalysis, ATP synthesis in the catalytic domain of F(1) is coupled via a rotary mechanism of the central stalk subunits to proton translocation. With the subunit a (MT-ATP6), forms the proton-conducting channel in the F(0) domain, that contains two crucial half-channels (inlet and outlet) that facilitate proton movement from the mitochondrial intermembrane space (IMS) into the matrix. Protons are taken up via the inlet half-channel and released through the outlet half-channel, following a Grotthuss mechanism. The protein is ATP synthase F(0) complex subunit C1, mitochondrial of Ovis aries (Sheep).